The chain runs to 635 residues: Threonine--tRNA ligase (635 aa).

Positions 1–61 (MIAITLPDGS…EQNVDLAIVT (61 aa)) constitute a TGS domain. A catalytic region spans residues 242-533 (DHRKLGKLLD…LLENHAGALP (292 aa)). Zn(2+) contacts are provided by Cys-333, His-384, and His-510.

Belongs to the class-II aminoacyl-tRNA synthetase family. As to quaternary structure, homodimer. Requires Zn(2+) as cofactor.

The protein resides in the cytoplasm. It catalyses the reaction tRNA(Thr) + L-threonine + ATP = L-threonyl-tRNA(Thr) + AMP + diphosphate + H(+). In terms of biological role, catalyzes the attachment of threonine to tRNA(Thr) in a two-step reaction: L-threonine is first activated by ATP to form Thr-AMP and then transferred to the acceptor end of tRNA(Thr). Also edits incorrectly charged L-seryl-tRNA(Thr). This Ralstonia nicotianae (strain ATCC BAA-1114 / GMI1000) (Ralstonia solanacearum) protein is Threonine--tRNA ligase.